The chain runs to 154 residues: Myoglobin (154 aa).

Residues 2 to 148 enclose the Globin domain; that stretch reads GLSDGEWQIV…FRNDIAAKYK (147 aa). S4 is subject to Phosphoserine. H65 contributes to the nitrite binding site. Position 65 (H65) interacts with O2. T68 is modified (phosphothreonine). H94 serves as a coordination point for heme b.

This sequence belongs to the globin family. Monomeric.

It localises to the cytoplasm. The protein localises to the sarcoplasm. It catalyses the reaction Fe(III)-heme b-[protein] + nitric oxide + H2O = Fe(II)-heme b-[protein] + nitrite + 2 H(+). It carries out the reaction H2O2 + AH2 = A + 2 H2O. Monomeric heme protein which primary function is to store oxygen and facilitate its diffusion within muscle tissues. Reversibly binds oxygen through a pentacoordinated heme iron and enables its timely and efficient release as needed during periods of heightened demand. Depending on the oxidative conditions of tissues and cells, and in addition to its ability to bind oxygen, it also has a nitrite reductase activity whereby it regulates the production of bioactive nitric oxide. Under stress conditions, like hypoxia and anoxia, it also protects cells against reactive oxygen species thanks to its pseudoperoxidase activity. The chain is Myoglobin (MB) from Canis lupus familiaris (Dog).